A 246-amino-acid chain; its full sequence is tRNA (guanine-N(1)-)-methyltransferase (246 aa).

S-adenosyl-L-methionine-binding positions include Gly-117 and 137-142 (IGDYVL).

The protein belongs to the RNA methyltransferase TrmD family. Homodimer.

It localises to the cytoplasm. It carries out the reaction guanosine(37) in tRNA + S-adenosyl-L-methionine = N(1)-methylguanosine(37) in tRNA + S-adenosyl-L-homocysteine + H(+). Functionally, specifically methylates guanosine-37 in various tRNAs. The polypeptide is tRNA (guanine-N(1)-)-methyltransferase (Acinetobacter baumannii (strain ACICU)).